A 423-amino-acid polypeptide reads, in one-letter code: Histidine--tRNA ligase (423 aa).

The protein belongs to the class-II aminoacyl-tRNA synthetase family. In terms of assembly, homodimer.

It localises to the cytoplasm. The catalysed reaction is tRNA(His) + L-histidine + ATP = L-histidyl-tRNA(His) + AMP + diphosphate + H(+). In Corynebacterium diphtheriae (strain ATCC 700971 / NCTC 13129 / Biotype gravis), this protein is Histidine--tRNA ligase.